The chain runs to 569 residues: Dihydroxy-acid dehydratase (569 aa).

Position 61 (Cys61) interacts with [2Fe-2S] cluster. Asp93 contacts Mg(2+). Cys134 contacts [2Fe-2S] cluster. Residues Asp135 and Lys136 each coordinate Mg(2+). An N6-carboxylysine modification is found at Lys136. Cys211 is a binding site for [2Fe-2S] cluster. Glu462 provides a ligand contact to Mg(2+). Catalysis depends on Ser488, which acts as the Proton acceptor.

The protein belongs to the IlvD/Edd family. Homodimer. [2Fe-2S] cluster serves as cofactor. Mg(2+) is required as a cofactor.

The enzyme catalyses (2R)-2,3-dihydroxy-3-methylbutanoate = 3-methyl-2-oxobutanoate + H2O. It catalyses the reaction (2R,3R)-2,3-dihydroxy-3-methylpentanoate = (S)-3-methyl-2-oxopentanoate + H2O. It participates in amino-acid biosynthesis; L-isoleucine biosynthesis; L-isoleucine from 2-oxobutanoate: step 3/4. It functions in the pathway amino-acid biosynthesis; L-valine biosynthesis; L-valine from pyruvate: step 3/4. Functionally, functions in the biosynthesis of branched-chain amino acids. Catalyzes the dehydration of (2R,3R)-2,3-dihydroxy-3-methylpentanoate (2,3-dihydroxy-3-methylvalerate) into 2-oxo-3-methylpentanoate (2-oxo-3-methylvalerate) and of (2R)-2,3-dihydroxy-3-methylbutanoate (2,3-dihydroxyisovalerate) into 2-oxo-3-methylbutanoate (2-oxoisovalerate), the penultimate precursor to L-isoleucine and L-valine, respectively. In Tropheryma whipplei (strain TW08/27) (Whipple's bacillus), this protein is Dihydroxy-acid dehydratase.